A 504-amino-acid polypeptide reads, in one-letter code: AMP phosphorylase 1 (504 aa).

Residues Gly-169, 195-200, and Thr-204 each bind AMP; that span reads SRAITS. Catalysis depends on Asp-257, which acts as the Proton donor. AMP is bound by residues Ser-265 and Lys-289.

The protein belongs to the thymidine/pyrimidine-nucleoside phosphorylase family. Type 2 subfamily.

It carries out the reaction AMP + phosphate = alpha-D-ribose 1,5-bisphosphate + adenine. The catalysed reaction is CMP + phosphate = cytosine + alpha-D-ribose 1,5-bisphosphate. The enzyme catalyses UMP + phosphate = alpha-D-ribose 1,5-bisphosphate + uracil. Its function is as follows. Catalyzes the conversion of AMP and phosphate to adenine and ribose 1,5-bisphosphate (R15P). Exhibits phosphorylase activity toward CMP and UMP in addition to AMP. Functions in an archaeal AMP degradation pathway, together with R15P isomerase and RubisCO. This chain is AMP phosphorylase 1, found in Archaeoglobus fulgidus (strain ATCC 49558 / DSM 4304 / JCM 9628 / NBRC 100126 / VC-16).